A 149-amino-acid polypeptide reads, in one-letter code: MHRIDVKILDDRLRTHEPAYATPGAAGLDLRACLNAPVTLHPGETTLIPSGLAIHLADPGLAAMVLPRSGLGHKHGIVLGNLVGLIDSDYQGQIFVSAWNRGRETFTVQPMERIAQLVVVPVLQVGFNIVDEFPQSDRGAAGFGSTGKH.

Residues 68 to 70 (RSG), Asn81, and 85 to 87 (LID) contribute to the substrate site.

The protein belongs to the dUTPase family. The cofactor is Mg(2+).

It carries out the reaction dUTP + H2O = dUMP + diphosphate + H(+). It participates in pyrimidine metabolism; dUMP biosynthesis; dUMP from dCTP (dUTP route): step 2/2. This enzyme is involved in nucleotide metabolism: it produces dUMP, the immediate precursor of thymidine nucleotides and it decreases the intracellular concentration of dUTP so that uracil cannot be incorporated into DNA. This chain is Deoxyuridine 5'-triphosphate nucleotidohydrolase, found in Aromatoleum aromaticum (strain DSM 19018 / LMG 30748 / EbN1) (Azoarcus sp. (strain EbN1)).